Reading from the N-terminus, the 718-residue chain is Protein Hook homolog 3 (718 aa).

An N-acetylmethionine modification is found at Met-1. The tract at residues 1–164 (MFSVESLERA…QELMSKESPV (164 aa)) is sufficient for interaction with microtubules. A phosphoserine mark is found at Ser-3 and Ser-6. The Calponin-homology (CH) domain maps to 10-126 (AELCESLLTW…RMLQLILGCA (117 aa)). Coiled coils occupy residues 167 to 433 (GNDA…VQAQ) and 462 to 667 (EIRE…YIVS). Ser-238 bears the Phosphoserine mark. The required for association with Golgi stretch occupies residues 553–718 (EKLHEANNEL…PGHVQPATAR (166 aa)). A required for interaction with MSR1 region spans residues 556 to 718 (HEANNELQKK…PGHVQPATAR (163 aa)). The segment at 682-718 (EDRLASTGSGQSFLARQRQATSSRRSYPGHVQPATAR) is disordered. Ser-693 and Ser-707 each carry phosphoserine. Low complexity predominate over residues 696–707 (ARQRQATSSRRS).

This sequence belongs to the hook family. As to quaternary structure, self-associates. Component of the FTS/Hook/FHIP complex (FHF complex), composed of AKTIP/FTS, FHIP1B, and one or more members of the Hook family of proteins HOOK1, HOOK2, and HOOK3. May interact directly with AKTIP/FTS, HOOK1 and HOOK2. Associates with several subunits of the homotypic vesicular sorting complex (the HOPS complex) including VPS16 and VPS41; these interactions may be indirect. Interacts with MSR1, and this association is stimulated by ligand binding to MSR1. Interacts with microtubules. Part of a tripartite complex with dynein and dynactin, acts an adapter linking the dynein motor complex and dynactin. Interacts with dynein intermediate chain and dynactin (DCTN1). Interacts with CCDC181. Interacts with LRGUK. (Microbial infection) Interacts with Salmonella typhimurium spiC.

Its subcellular location is the cytoplasm. It is found in the cytoskeleton. The protein resides in the golgi apparatus. Functionally, acts as an adapter protein linking the dynein motor complex to various cargos and converts dynein from a non-processive to a highly processive motor in the presence of dynactin. Facilitates the interaction between dynein and dynactin and activates dynein processivity (the ability to move along a microtubule for a long distance without falling off the track). Predominantly recruits 2 dyneins, which increases both the force and speed of the microtubule motor. Component of the FTS/Hook/FHIP complex (FHF complex). The FHF complex may function to promote vesicle trafficking and/or fusion via the homotypic vesicular protein sorting complex (the HOPS complex). May regulate clearance of endocytosed receptors such as MSR1. Participates in defining the architecture and localization of the Golgi complex. FHF complex promotes the distribution of AP-4 complex to the perinuclear area of the cell. In terms of biological role, (Microbial infection) May serve as a target for the spiC protein from Salmonella typhimurium, which inactivates it, leading to a strong alteration in cellular trafficking. The polypeptide is Protein Hook homolog 3 (Homo sapiens (Human)).